Reading from the N-terminus, the 663-residue chain is Transketolase 2 (663 aa).

Substrate is bound at residue His-25. Thiamine diphosphate contacts are provided by residues His-65 and 113-115 (GPL). Asp-154 serves as a coordination point for Mg(2+). The thiamine diphosphate site is built by Gly-155 and Asn-184. Residues Asn-184 and Ile-186 each contribute to the Mg(2+) site. Residues His-259, Arg-356, and Ser-383 each contribute to the substrate site. His-259 provides a ligand contact to thiamine diphosphate. Glu-410 (proton donor) is an active-site residue. Thiamine diphosphate is bound at residue Phe-436. Substrate-binding residues include His-460, Asp-468, and Arg-519.

This sequence belongs to the transketolase family. In terms of assembly, homodimer. Mg(2+) is required as a cofactor. It depends on Ca(2+) as a cofactor. The cofactor is Mn(2+). Co(2+) serves as cofactor. Requires thiamine diphosphate as cofactor.

It catalyses the reaction D-sedoheptulose 7-phosphate + D-glyceraldehyde 3-phosphate = aldehydo-D-ribose 5-phosphate + D-xylulose 5-phosphate. Functionally, catalyzes the transfer of a two-carbon ketol group from a ketose donor to an aldose acceptor, via a covalent intermediate with the cofactor thiamine pyrophosphate. This chain is Transketolase 2 (tkt2), found in Vibrio vulnificus (strain CMCP6).